Here is a 300-residue protein sequence, read N- to C-terminus: Acetyl-coenzyme A carboxylase carboxyl transferase subunit beta (300 aa).

Residues 24-293 (LWTNCESCSQ…NAPGAALGGA (270 aa)) form the CoA carboxyltransferase N-terminal domain. The Zn(2+) site is built by Cys-28, Cys-31, Cys-47, and Cys-50. The segment at 28–50 (CESCSQMILVKDLQKAMNVCPHC) adopts a C4-type zinc-finger fold.

Belongs to the AccD/PCCB family. In terms of assembly, acetyl-CoA carboxylase is a heterohexamer composed of biotin carboxyl carrier protein (AccB), biotin carboxylase (AccC) and two subunits each of ACCase subunit alpha (AccA) and ACCase subunit beta (AccD). The cofactor is Zn(2+).

The protein localises to the cytoplasm. It catalyses the reaction N(6)-carboxybiotinyl-L-lysyl-[protein] + acetyl-CoA = N(6)-biotinyl-L-lysyl-[protein] + malonyl-CoA. The protein operates within lipid metabolism; malonyl-CoA biosynthesis; malonyl-CoA from acetyl-CoA: step 1/1. In terms of biological role, component of the acetyl coenzyme A carboxylase (ACC) complex. Biotin carboxylase (BC) catalyzes the carboxylation of biotin on its carrier protein (BCCP) and then the CO(2) group is transferred by the transcarboxylase to acetyl-CoA to form malonyl-CoA. This Gluconacetobacter diazotrophicus (strain ATCC 49037 / DSM 5601 / CCUG 37298 / CIP 103539 / LMG 7603 / PAl5) protein is Acetyl-coenzyme A carboxylase carboxyl transferase subunit beta.